Reading from the N-terminus, the 174-residue chain is uncharacterized protein (174 aa).

A helical transmembrane segment spans residues 7-24 (LLLLAFAVCLAVGFSGCL).

It is found in the membrane. This is an uncharacterized protein from Methanocaldococcus jannaschii (strain ATCC 43067 / DSM 2661 / JAL-1 / JCM 10045 / NBRC 100440) (Methanococcus jannaschii).